A 163-amino-acid chain; its full sequence is Homoaconitase small subunit (163 aa).

Belongs to the LeuD family. Heterodimer of HacA and HacB.

The enzyme catalyses (2R,3S)-homoisocitrate = cis-homoaconitate + H2O. It functions in the pathway amino-acid biosynthesis; L-lysine biosynthesis via AAA pathway; L-alpha-aminoadipate from 2-oxoglutarate: step 3/5. Is not inhibited by lysine. Functionally, catalyzes the reversible hydration of cis-homoaconitate ((Z)-but-1-ene-1,2,4-tricarboxylate) to homoisocitrate ((1R,2S)-1-hydroxybutane-1,2,4-tricarboxylate). Can catalyze neither the dehydration of (R)-homocitrate ((2R)-2-hydroxybutane-1,2,4-tricarboxylate) into cis-homoaconitate in vitro, nor the reverse reaction. Is not active toward (S)-homocitrate, cis-aconitate or citrate as substrate. This is Homoaconitase small subunit (hacB) from Thermus thermophilus (strain ATCC BAA-163 / DSM 7039 / HB27).